We begin with the raw amino-acid sequence, 145 residues long: MSRFLSNATNRIDAKGRVSVPSAFRSVLVQRNVQELYCFQDFVFPAISVGGPDLLERFERQIAAEDPFSPDANEMSLLIHGGGVFMKLDAEGRLMVTDFIRGFTGISDEVTFVGRADHFQLWQPQAFVAAQAQARGERKLAGKRS.

SpoVT-AbrB domains lie at 7-54 (NATN…GPDL) and 83-126 (GVFM…QPQA).

It belongs to the MraZ family. In terms of assembly, forms oligomers.

It localises to the cytoplasm. It is found in the nucleoid. This is Transcriptional regulator MraZ from Rhizobium leguminosarum bv. trifolii (strain WSM2304).